Consider the following 2053-residue polypeptide: Integrator complex subunit 1 (2053 aa).

Disordered regions lie at residues 36–58 (KILP…ALAS) and 249–285 (SLPS…ESEP). Over residues 268 to 283 (DNSTQSLDASPLNTES) the composition is skewed to polar residues. Residues 708–728 (LAIIAFYWKAWLILLMISAHN) form a helical membrane-spanning segment.

It belongs to the Integrator subunit 1 family. As to quaternary structure, belongs to the multiprotein complex Integrator, at least composed of IntS1, IntS2, IntS3, IntS4, omd/IntS5, IntS6, defl/IntS7, IntS8, IntS9, IntS10, IntS11, IntS12, asun/IntS13, IntS14 and IntS15. The core complex associates with protein phosphatase 2A subunits mts/PP2A and Pp2A-29B, to form the Integrator-PP2A (INTAC) complex. Within the complex, interacts with IntS12 and IntS9. Interaction with IntS12 is likely to be important for promoting 3'-end processing of snRNAs. Interacts with Mediator complex members Cdk8 and CycC.

It localises to the nucleus membrane. The protein localises to the nucleus. Component of the integrator complex, a multiprotein complex that terminates RNA polymerase II (Pol II) transcription in the promoter-proximal region of genes. The integrator complex provides a quality checkpoint during transcription elongation by driving premature transcription termination of transcripts that are unfavorably configured for transcriptional elongation: the complex terminates transcription by (1) catalyzing dephosphorylation of the C-terminal domain (CTD) of Pol II subunit Polr2A/Rbp1 and Spt5, and (2) degrading the exiting nascent RNA transcript via endonuclease activity. The integrator complex is also involved in the 3'-end processing of the U7 snRNA, and also the spliceosomal snRNAs U1, U2, U4 and U5. Required for the normal expression of the Integrator complex component IntS12. In Drosophila melanogaster (Fruit fly), this protein is Integrator complex subunit 1.